A 384-amino-acid polypeptide reads, in one-letter code: Outer membrane protein assembly factor BamB (384 aa).

The N-terminal stretch at 1-21 is a signal peptide; it reads MKLTLKRKFIAVLALTSLLGA. Cys22 carries the N-palmitoyl cysteine lipid modification. The S-diacylglycerol cysteine moiety is linked to residue Cys22.

Belongs to the BamB family. Part of the Bam complex.

The protein resides in the cell outer membrane. Part of the outer membrane protein assembly complex, which is involved in assembly and insertion of beta-barrel proteins into the outer membrane. The polypeptide is Outer membrane protein assembly factor BamB (Taylorella asinigenitalis (strain MCE3)).